Here is a 228-residue protein sequence, read N- to C-terminus: Adapter protein MecA (228 aa).

It belongs to the MecA family. Homodimer.

In terms of biological role, enables the recognition and targeting of unfolded and aggregated proteins to the ClpC protease or to other proteins involved in proteolysis. This chain is Adapter protein MecA, found in Lacticaseibacillus paracasei (strain ATCC 334 / BCRC 17002 / CCUG 31169 / CIP 107868 / KCTC 3260 / NRRL B-441) (Lactobacillus paracasei).